A 359-amino-acid chain; its full sequence is Probable dual-specificity RNA methyltransferase RlmN (359 aa).

Residue glutamate 100 is the Proton acceptor of the active site. In terms of domain architecture, Radical SAM core spans threonine 106–aspartate 340. Cysteine 113 and cysteine 345 are disulfide-bonded. Positions 120, 124, and 127 each coordinate [4Fe-4S] cluster. S-adenosyl-L-methionine is bound by residues glycine 167–glutamate 168, serine 197, serine 226–histidine 228, and asparagine 302. The active-site S-methylcysteine intermediate is the cysteine 345.

The protein belongs to the radical SAM superfamily. RlmN family. Requires [4Fe-4S] cluster as cofactor.

Its subcellular location is the cytoplasm. It carries out the reaction adenosine(2503) in 23S rRNA + 2 reduced [2Fe-2S]-[ferredoxin] + 2 S-adenosyl-L-methionine = 2-methyladenosine(2503) in 23S rRNA + 5'-deoxyadenosine + L-methionine + 2 oxidized [2Fe-2S]-[ferredoxin] + S-adenosyl-L-homocysteine. The enzyme catalyses adenosine(37) in tRNA + 2 reduced [2Fe-2S]-[ferredoxin] + 2 S-adenosyl-L-methionine = 2-methyladenosine(37) in tRNA + 5'-deoxyadenosine + L-methionine + 2 oxidized [2Fe-2S]-[ferredoxin] + S-adenosyl-L-homocysteine. In terms of biological role, specifically methylates position 2 of adenine 2503 in 23S rRNA and position 2 of adenine 37 in tRNAs. This is Probable dual-specificity RNA methyltransferase RlmN from Prochlorococcus marinus (strain NATL2A).